A 358-amino-acid chain; its full sequence is Uroporphyrinogen decarboxylase (358 aa).

Substrate contacts are provided by residues 36 to 40, Asp-85, Tyr-160, Ser-215, and His-338; that span reads RQAGR.

This sequence belongs to the uroporphyrinogen decarboxylase family. As to quaternary structure, homodimer.

The protein resides in the cytoplasm. The catalysed reaction is uroporphyrinogen III + 4 H(+) = coproporphyrinogen III + 4 CO2. It functions in the pathway porphyrin-containing compound metabolism; protoporphyrin-IX biosynthesis; coproporphyrinogen-III from 5-aminolevulinate: step 4/4. Catalyzes the decarboxylation of four acetate groups of uroporphyrinogen-III to yield coproporphyrinogen-III. This chain is Uroporphyrinogen decarboxylase, found in Corynebacterium glutamicum (strain R).